The following is a 262-amino-acid chain: uncharacterized protein (262 aa).

One can recognise an S4 RNA-binding domain in the interval Leu6 to Val70. Catalysis depends on Asp108, which acts as the Nucleophile.

Belongs to the pseudouridine synthase RsuA family.

The catalysed reaction is a uridine in RNA = a pseudouridine in RNA. This is an uncharacterized protein from Helicobacter pylori (strain J99 / ATCC 700824) (Campylobacter pylori J99).